The following is a 430-amino-acid chain: Histidine--tRNA ligase (430 aa).

It belongs to the class-II aminoacyl-tRNA synthetase family. Homodimer.

The protein localises to the cytoplasm. It carries out the reaction tRNA(His) + L-histidine + ATP = L-histidyl-tRNA(His) + AMP + diphosphate + H(+). This is Histidine--tRNA ligase from Chlamydia felis (strain Fe/C-56) (Chlamydophila felis).